The following is a 227-amino-acid chain: Cytochrome c oxidase subunit 2 (227 aa).

Topologically, residues 1–14 (MAYPYELGFQDASS) are mitochondrial intermembrane. The chain crosses the membrane as a helical span at residues 15 to 45 (PIMEELLHFHDHTLMIVFLISTLVLYLITIM). Over 46-59 (LTTKLTHTSTMDAQ) the chain is Mitochondrial matrix. Residues 60–87 (EIETIWTILPAIILILIALPSLRILYMM) form a helical membrane-spanning segment. At 88 to 227 (DEINSPSLTV…DFEIWSSSML (140 aa)) the chain is on the mitochondrial intermembrane side. Residues histidine 161, cysteine 196, glutamate 198, cysteine 200, histidine 204, and methionine 207 each coordinate Cu cation. Glutamate 198 is a binding site for Mg(2+).

This sequence belongs to the cytochrome c oxidase subunit 2 family. In terms of assembly, component of the cytochrome c oxidase (complex IV, CIV), a multisubunit enzyme composed of 14 subunits. The complex is composed of a catalytic core of 3 subunits MT-CO1, MT-CO2 and MT-CO3, encoded in the mitochondrial DNA, and 11 supernumerary subunits COX4I, COX5A, COX5B, COX6A, COX6B, COX6C, COX7A, COX7B, COX7C, COX8 and NDUFA4, which are encoded in the nuclear genome. The complex exists as a monomer or a dimer and forms supercomplexes (SCs) in the inner mitochondrial membrane with NADH-ubiquinone oxidoreductase (complex I, CI) and ubiquinol-cytochrome c oxidoreductase (cytochrome b-c1 complex, complex III, CIII), resulting in different assemblies (supercomplex SCI(1)III(2)IV(1) and megacomplex MCI(2)III(2)IV(2)). Found in a complex with TMEM177, COA6, COX18, COX20, SCO1 and SCO2. Interacts with TMEM177 in a COX20-dependent manner. Interacts with COX20. Interacts with COX16. Requires Cu cation as cofactor.

It is found in the mitochondrion inner membrane. The catalysed reaction is 4 Fe(II)-[cytochrome c] + O2 + 8 H(+)(in) = 4 Fe(III)-[cytochrome c] + 2 H2O + 4 H(+)(out). In terms of biological role, component of the cytochrome c oxidase, the last enzyme in the mitochondrial electron transport chain which drives oxidative phosphorylation. The respiratory chain contains 3 multisubunit complexes succinate dehydrogenase (complex II, CII), ubiquinol-cytochrome c oxidoreductase (cytochrome b-c1 complex, complex III, CIII) and cytochrome c oxidase (complex IV, CIV), that cooperate to transfer electrons derived from NADH and succinate to molecular oxygen, creating an electrochemical gradient over the inner membrane that drives transmembrane transport and the ATP synthase. Cytochrome c oxidase is the component of the respiratory chain that catalyzes the reduction of oxygen to water. Electrons originating from reduced cytochrome c in the intermembrane space (IMS) are transferred via the dinuclear copper A center (CU(A)) of subunit 2 and heme A of subunit 1 to the active site in subunit 1, a binuclear center (BNC) formed by heme A3 and copper B (CU(B)). The BNC reduces molecular oxygen to 2 water molecules using 4 electrons from cytochrome c in the IMS and 4 protons from the mitochondrial matrix. In Cavia aperea (Brazilian guinea pig), this protein is Cytochrome c oxidase subunit 2 (MT-CO2).